We begin with the raw amino-acid sequence, 110 residues long: UPF0122 protein Sca_0859 (110 aa).

The protein belongs to the UPF0122 family.

Might take part in the signal recognition particle (SRP) pathway. This is inferred from the conservation of its genetic proximity to ftsY/ffh. May be a regulatory protein. This Staphylococcus carnosus (strain TM300) protein is UPF0122 protein Sca_0859.